The primary structure comprises 33 residues: LSLGTIKKLLQILAQGLKAICNHRDLIAKGCQA.

It belongs to the myrmexin family. In terms of assembly, heterodimer composed of subunit LS1 and subunit SS1 (U1-PSDTX-Pt1b), heterodimer composed of subunit LS1 and SS2 (U1-PSDTX-Pt1b), and heterodimer composed of subunit LS1 and SS3; disulfide-linked. In terms of tissue distribution, expressed by the venom gland.

Its subcellular location is the secreted. Its function is as follows. This heterodimer may have anti-inflammatory properties, since the myrmexin complex (composed of 6 SS-LS heterodimers) inhibits carrageenin-induced edema in a dose-dependent manner (after subcutaneous injection into rats). The sequence is that of U1-pseudomyrmecitoxin-Pt1 subunit LS1 from Pseudomyrmex triplarinus (Ant).